The primary structure comprises 105 residues: Large ribosomal subunit protein uL24 (105 aa).

The protein belongs to the universal ribosomal protein uL24 family. In terms of assembly, part of the 50S ribosomal subunit.

Its function is as follows. One of two assembly initiator proteins, it binds directly to the 5'-end of the 23S rRNA, where it nucleates assembly of the 50S subunit. Functionally, one of the proteins that surrounds the polypeptide exit tunnel on the outside of the subunit. In Vibrio parahaemolyticus serotype O3:K6 (strain RIMD 2210633), this protein is Large ribosomal subunit protein uL24.